The primary structure comprises 118 residues: NADH-ubiquinone oxidoreductase chain 3 (118 aa).

Transmembrane regions (helical) follow at residues Ile-7–Leu-27, Leu-62–Val-82, and Ile-87–Leu-107.

It belongs to the complex I subunit 3 family.

The protein resides in the mitochondrion membrane. It carries out the reaction a ubiquinone + NADH + 5 H(+)(in) = a ubiquinol + NAD(+) + 4 H(+)(out). Functionally, core subunit of the mitochondrial membrane respiratory chain NADH dehydrogenase (Complex I) that is believed to belong to the minimal assembly required for catalysis. Complex I functions in the transfer of electrons from NADH to the respiratory chain. The immediate electron acceptor for the enzyme is believed to be ubiquinone. This Allium cepa (Onion) protein is NADH-ubiquinone oxidoreductase chain 3 (ND3).